A 674-amino-acid polypeptide reads, in one-letter code: Carbon monoxide dehydrogenase/acetyl-CoA synthase subunit beta (674 aa).

The tract at residues 1 to 25 (MPRFRDLSHNCRPSEAPRVMEPKNR) is disordered. 6 residues coordinate [4Fe-4S] cluster: Cys59, Cys67, Cys68, Cys71, Cys76, and Cys90. Residues His283, Cys317, Cys355, Cys470, Cys500, and Cys550 each coordinate [Ni-4Fe-4S] cluster.

In terms of assembly, tetramer of two alpha and two beta chains. The cofactor is [Ni-Fe-S] cluster. [4Fe-4S] cluster is required as a cofactor.

The catalysed reaction is CO + 2 oxidized [2Fe-2S]-[ferredoxin] + H2O = 2 reduced [2Fe-2S]-[ferredoxin] + CO2 + 2 H(+). The beta subunit (this protein) generates CO from CO(2), while the alpha subunit combines the CO with CoA and a methyl group to form acetyl-CoA. The methyl group, which is incorporated into acetyl-CoA, is transferred to the alpha subunit by a corrinoid iron-sulfur protein. This is Carbon monoxide dehydrogenase/acetyl-CoA synthase subunit beta from Moorella thermoacetica (Clostridium thermoaceticum).